The chain runs to 288 residues: Protease HtpX homolog (288 aa).

The next 2 membrane-spanning stretches (helical) occupy residues 6 to 26 and 28 to 48; these read TAFLMVALMLVFIAVGGYVGG and QGMMIAFLMAAGMNIFSYFFS. His-130 provides a ligand contact to Zn(2+). Glu-131 is an active-site residue. His-134 is a Zn(2+) binding site. 2 consecutive transmembrane segments (helical) span residues 140–160 and 179–199; these read ILTGSVAAILAGAIAMVANFA and VIMLIIAVVMPLAATVIQMAI. Zn(2+) is bound at residue Glu-204.

It belongs to the peptidase M48B family. It depends on Zn(2+) as a cofactor.

The protein resides in the cell inner membrane. This Campylobacter concisus (strain 13826) protein is Protease HtpX homolog.